The primary structure comprises 212 residues: MAIGLVGRKVGMTRVFQEDGASVPVTVIEVLANRVTQVKSDDTDGYRALQVTTGEKKASRVTKPLAGHFAKAGTEAGRGLWEFRLQNGEGEDYAVGSELTVDIFAEVNKVDVTGTSKGKGFAGTVKRWNFSMQDATHGNSLSHRAPGSIGQNQSPGKVFKGKKMAGQMGNEQVTTQSLELVRVDAERSLLLIKGAVPGATGSDVIVKPAVKA.

Q153 bears the N5-methylglutamine mark.

This sequence belongs to the universal ribosomal protein uL3 family. As to quaternary structure, part of the 50S ribosomal subunit. Forms a cluster with proteins L14 and L19. In terms of processing, methylated by PrmB.

Functionally, one of the primary rRNA binding proteins, it binds directly near the 3'-end of the 23S rRNA, where it nucleates assembly of the 50S subunit. This is Large ribosomal subunit protein uL3 from Idiomarina loihiensis (strain ATCC BAA-735 / DSM 15497 / L2-TR).